The primary structure comprises 243 residues: Pyridoxine 5'-phosphate synthase (243 aa).

Asn9 is a binding site for 3-amino-2-oxopropyl phosphate. 11-12 (DH) lines the 1-deoxy-D-xylulose 5-phosphate pocket. Arg20 serves as a coordination point for 3-amino-2-oxopropyl phosphate. His45 (proton acceptor) is an active-site residue. 1-deoxy-D-xylulose 5-phosphate-binding residues include Arg47 and His52. Glu72 functions as the Proton acceptor in the catalytic mechanism. 1-deoxy-D-xylulose 5-phosphate is bound at residue Thr102. The active-site Proton donor is the His193. Residues Gly194 and 215 to 216 (GH) contribute to the 3-amino-2-oxopropyl phosphate site.

Belongs to the PNP synthase family. As to quaternary structure, homooctamer; tetramer of dimers.

It localises to the cytoplasm. The catalysed reaction is 3-amino-2-oxopropyl phosphate + 1-deoxy-D-xylulose 5-phosphate = pyridoxine 5'-phosphate + phosphate + 2 H2O + H(+). It participates in cofactor biosynthesis; pyridoxine 5'-phosphate biosynthesis; pyridoxine 5'-phosphate from D-erythrose 4-phosphate: step 5/5. Its function is as follows. Catalyzes the complicated ring closure reaction between the two acyclic compounds 1-deoxy-D-xylulose-5-phosphate (DXP) and 3-amino-2-oxopropyl phosphate (1-amino-acetone-3-phosphate or AAP) to form pyridoxine 5'-phosphate (PNP) and inorganic phosphate. The polypeptide is Pyridoxine 5'-phosphate synthase (Vibrio vulnificus (strain CMCP6)).